The primary structure comprises 252 residues: MPEGDTVFHTAAALRAALEGKTLTRCDVRVPRYATVDLSGAVVDEVLSRGKHLFIRAGSASIHSHLKMEGAWRIGHTKVAPHRIRIVLETADTRAIGIDLGILEVLDRGTDMDAVAYLGPDLLGPDWEPRVAADNLAADPDRPLAQALLDQRVMAGVGNVYCNELCFVFGRLPTAPVGTLKDPLRVVQRARDMLWLNRSRWNRTTTGDTRNGRQLWVYGRAGEPCRRCGTLIQTDRGGERVTYWCPVCQTAS.

The Schiff-base intermediate with DNA role is filled by Pro-2. The active-site Proton donor is the Glu-3. The active-site Proton donor (in beta-elimination) is Lys-51. The segment at 216 to 250 adopts an FPG-type zinc-finger fold; the sequence is WVYGRAGEPCRRCGTLIQTDRGGERVTYWCPVCQT. Cys-225, Cys-228, Cys-245, and Cys-248 together coordinate Zn(2+).

It belongs to the FPG family. Monomer. Zn(2+) is required as a cofactor.

It catalyses the reaction 2'-deoxyribonucleotide-(2'-deoxyribose 5'-phosphate)-2'-deoxyribonucleotide-DNA = a 3'-end 2'-deoxyribonucleotide-(2,3-dehydro-2,3-deoxyribose 5'-phosphate)-DNA + a 5'-end 5'-phospho-2'-deoxyribonucleoside-DNA + H(+). In terms of biological role, involved in base excision repair of DNA damaged by oxidation or by mutagenic agents. Acts as DNA glycosylase that recognizes and removes damaged bases. Its function is as follows. Involved in the repair of psoralen-UVA DNA cross-links. A lyase that cleaves single-stranded (ss)DNA but not double-stranded (ds)DNA with an abasic site. Has 5-hydroxyuracil (5-OH-U) glycosylase activity on ssDNA with 5-OH-U, with 10-fold less activity on dsDNA, but weak to no uracil glycosylase activity. Has weak glycosylase activity on thymine glycol and dihydrothymine residues in ssDNA. Cleaves the DNA backbone by beta-delta elimination to generate a single-strand break at the site of the removed base with both 3'- and 5'-phosphates. The protein is DNA-(apurinic or apyrimidinic site) lyase Nei2 of Mycolicibacterium smegmatis (strain ATCC 700084 / mc(2)155) (Mycobacterium smegmatis).